The sequence spans 422 residues: Enolase (422 aa).

A (2R)-2-phosphoglycerate-binding site is contributed by glutamine 162. Residue glutamate 204 is the Proton donor of the active site. Aspartate 241, glutamate 284, and aspartate 311 together coordinate Mg(2+). 4 residues coordinate (2R)-2-phosphoglycerate: lysine 336, arginine 365, serine 366, and lysine 387. Lysine 336 (proton acceptor) is an active-site residue.

The protein belongs to the enolase family. It depends on Mg(2+) as a cofactor.

The protein resides in the cytoplasm. It localises to the secreted. The protein localises to the cell surface. The enzyme catalyses (2R)-2-phosphoglycerate = phosphoenolpyruvate + H2O. Its pathway is carbohydrate degradation; glycolysis; pyruvate from D-glyceraldehyde 3-phosphate: step 4/5. Functionally, catalyzes the reversible conversion of 2-phosphoglycerate (2-PG) into phosphoenolpyruvate (PEP). It is essential for the degradation of carbohydrates via glycolysis. This chain is Enolase, found in Bartonella tribocorum (strain CIP 105476 / IBS 506).